The sequence spans 156 residues: Arginine repressor (156 aa).

It belongs to the ArgR family.

It is found in the cytoplasm. It participates in amino-acid biosynthesis; L-arginine biosynthesis [regulation]. Regulates arginine biosynthesis genes. This Shewanella woodyi (strain ATCC 51908 / MS32) protein is Arginine repressor.